The sequence spans 110 residues: Ig kappa chain V region 3547 (110 aa).

The segment at 1-23 (AYDMTQTPSSVSAAVGGTVTINC) is framework-1. The complementarity-determining-1 stretch occupies residues 24–34 (QASEDISANLA). The tract at residues 35 to 49 (WYQQKPGQPPKLLIY) is framework-2. The segment at 50–56 (AASDLAS) is complementarity-determining-2. Positions 57–88 (GVPSRFKGSGSGTEYTLTISGVQCADAATYYC) are framework-3. Residues 89 to 99 (QSADYSGSAVT) are complementarity-determining-3. A framework-4 region spans residues 100–109 (FGGGTEVVVK).

This chain is Ig kappa chain V region 3547, found in Oryctolagus cuniculus (Rabbit).